The following is a 111-amino-acid chain: PHD finger-like domain-containing protein 5A (111 aa).

It belongs to the PHF5 family.

This is PHD finger-like domain-containing protein 5A from Drosophila melanogaster (Fruit fly).